The following is a 1328-amino-acid chain: Tubulin polyglutamylase TTLL5 (1328 aa).

A disordered region spans residues 1 to 22 (MPVVMARDLEETASSSEDEDLA). The TTL domain maps to 62 to 407 (RYHLSYKIVR…VCQDPAQRTS (346 aa)). ATP-binding positions include lysine 180, 186–187 (RG), 208–211 (SRYI), and 221–223 (KFD). Residue arginine 186 participates in a protein binding. Position 247 (arginine 247) interacts with L-glutamate. 268–269 (TN) serves as a coordination point for ATP. L-glutamate is bound by residues tyrosine 270, serine 271, and lysine 293. 3 residues coordinate Mg(2+): aspartate 353, glutamate 366, and asparagine 368. The tract at residues 378 to 488 (PLDLKIKASM…RGGFIRIFPT (111 aa)) is c-MTBD region. Lysine 384 lines the L-glutamate pocket. Disordered regions lie at residues 411–436 (IYPSFESSRRNPFQKPQRTRPLSASD), 585–631 (AQPA…QAKY), 834–853 (HSKSSKNSSSYSDSGAKGDH), 948–975 (PALLLSPVPDNAPPSIHSGTQNVSPAGL), 1006–1032 (SSAKAAGSCHPHKHHSGIAKTQKEGED), 1085–1129 (RSSA…LQTG), and 1212–1271 (RISS…QLNG). The span at 420 to 432 (RNPFQKPQRTRPL) shows a compositional bias: polar residues. The segment covering 597 to 617 (ESEEEEEVGLDNDDEEQEASQ) has biased composition (acidic residues). Positions 838 to 847 (SKNSSSYSDS) are enriched in low complexity. Composition is skewed to polar residues over residues 1116–1128 (THSSPPGSRSLQT), 1214–1227 (SSATTGGQKPNTLP), 1234–1248 (PNSSTLVSKPASNHK), and 1257–1271 (QRASKGSSAEGQLNG).

The protein belongs to the tubulin--tyrosine ligase family. Interacts with the transcriptional coactivators NCOA1/SRC-1 and NCOA2/TIF2. The cofactor is Mg(2+). Highly expressed in brain, kidney, liver, spleen and testis. Expressed in heart, lung, muscle and trachea.

The protein localises to the cell projection. Its subcellular location is the cilium. It is found in the cytoplasm. The protein resides in the cytoskeleton. It localises to the cilium basal body. The protein localises to the nucleus. It carries out the reaction L-glutamyl-[protein] + L-glutamate + ATP = gamma-L-glutamyl-L-glutamyl-[protein] + ADP + phosphate + H(+). It catalyses the reaction (L-glutamyl)(n)-gamma-L-glutamyl-L-glutamyl-[protein] + L-glutamate + ATP = (L-glutamyl)(n+1)-gamma-L-glutamyl-L-glutamyl-[protein] + ADP + phosphate + H(+). In terms of biological role, polyglutamylase which modifies tubulin, generating polyglutamate side chains on the gamma-carboxyl group of specific glutamate residues within the C-terminal tail of tubulin. Preferentially mediates ATP-dependent initiation step of the polyglutamylation reaction over the elongation step. Preferentially modifies the alpha-tubulin tail over a beta-tail. Required for CCSAP localization to both polyglutamylated spindle and cilia microtubules. Increases the effects of transcriptional coactivator NCOA2/TIF2 in glucocorticoid receptor-mediated repression and induction and in androgen receptor-mediated induction. This chain is Tubulin polyglutamylase TTLL5, found in Mus musculus (Mouse).